We begin with the raw amino-acid sequence, 413 residues long: 2,3-diketo-5-methylthiopentyl-1-phosphate enolase (413 aa).

K98 acts as the Proton acceptor in catalysis. Residues K147, 173–176, H264, G337, and 359–360 each bind substrate; these read KDDE and GG. Mg(2+) is bound by residues K173, D175, and E176. The residue at position 173 (K173) is an N6-carboxylysine.

The protein belongs to the RuBisCO large chain family. Type IV subfamily. As to quaternary structure, homodimer. Requires Mg(2+) as cofactor.

The catalysed reaction is 5-methylsulfanyl-2,3-dioxopentyl phosphate = 2-hydroxy-5-methylsulfanyl-3-oxopent-1-enyl phosphate. It participates in amino-acid biosynthesis; L-methionine biosynthesis via salvage pathway; L-methionine from S-methyl-5-thio-alpha-D-ribose 1-phosphate: step 3/6. Functionally, catalyzes the enolization of 2,3-diketo-5-methylthiopentyl-1-phosphate (DK-MTP-1-P) into 2-hydroxy-3-keto-5-methylthiopentenyl-1-phosphate (HK-MTPenyl-1-P). The protein is 2,3-diketo-5-methylthiopentyl-1-phosphate enolase of Geobacillus thermodenitrificans (strain NG80-2).